Consider the following 648-residue polypeptide: Acetyl-coenzyme A synthetase (648 aa).

CoA is bound by residues 191–194 (RGGR), Thr-310, and Asn-334. Residues 386 to 388 (GEP), 410 to 415 (DTWWQT), Asp-499, and Arg-514 contribute to the ATP site. Ser-522 serves as a coordination point for CoA. Residue Arg-525 coordinates ATP. Residues Val-536, His-538, and Ile-541 each contribute to the Mg(2+) site. CoA is bound at residue Arg-583. Lys-608 is subject to N6-acetyllysine.

This sequence belongs to the ATP-dependent AMP-binding enzyme family. The cofactor is Mg(2+). Post-translationally, acetylated. Deacetylation by the SIR2-homolog deacetylase activates the enzyme.

It carries out the reaction acetate + ATP + CoA = acetyl-CoA + AMP + diphosphate. Functionally, catalyzes the conversion of acetate into acetyl-CoA (AcCoA), an essential intermediate at the junction of anabolic and catabolic pathways. AcsA undergoes a two-step reaction. In the first half reaction, AcsA combines acetate with ATP to form acetyl-adenylate (AcAMP) intermediate. In the second half reaction, it can then transfer the acetyl group from AcAMP to the sulfhydryl group of CoA, forming the product AcCoA. The protein is Acetyl-coenzyme A synthetase of Aeromonas salmonicida (strain A449).